The chain runs to 635 residues: tRNA uridine 5-carboxymethylaminomethyl modification enzyme MnmG (635 aa).

15–20 (GAGHAG) serves as a coordination point for FAD. NAD(+) is bound at residue 276-290 (GPRYCPSIEDKIVRF).

This sequence belongs to the MnmG family. As to quaternary structure, homodimer. Heterotetramer of two MnmE and two MnmG subunits. Requires FAD as cofactor.

It localises to the cytoplasm. In terms of biological role, NAD-binding protein involved in the addition of a carboxymethylaminomethyl (cmnm) group at the wobble position (U34) of certain tRNAs, forming tRNA-cmnm(5)s(2)U34. This Streptococcus sanguinis (strain SK36) protein is tRNA uridine 5-carboxymethylaminomethyl modification enzyme MnmG.